Consider the following 159-residue polypeptide: SsrA-binding protein (159 aa).

The segment covering 138–153 (KREDGKDKDWSREKER) has biased composition (basic and acidic residues). Residues 138-159 (KREDGKDKDWSREKERLMKHKA) form a disordered region.

It belongs to the SmpB family.

It is found in the cytoplasm. In terms of biological role, required for rescue of stalled ribosomes mediated by trans-translation. Binds to transfer-messenger RNA (tmRNA), required for stable association of tmRNA with ribosomes. tmRNA and SmpB together mimic tRNA shape, replacing the anticodon stem-loop with SmpB. tmRNA is encoded by the ssrA gene; the 2 termini fold to resemble tRNA(Ala) and it encodes a 'tag peptide', a short internal open reading frame. During trans-translation Ala-aminoacylated tmRNA acts like a tRNA, entering the A-site of stalled ribosomes, displacing the stalled mRNA. The ribosome then switches to translate the ORF on the tmRNA; the nascent peptide is terminated with the 'tag peptide' encoded by the tmRNA and targeted for degradation. The ribosome is freed to recommence translation, which seems to be the essential function of trans-translation. This is SsrA-binding protein from Pseudoalteromonas translucida (strain TAC 125).